Consider the following 285-residue polypeptide: UPF0603 protein At1g54780, chloroplastic (285 aa).

2 disordered regions span residues 1 to 48 and 228 to 251; these read METL…LSTR and GQPDPGGPTVKDSKRESNFKTKEE. Positions 22–40 are enriched in polar residues; the sequence is HQTKPTSHSLSLSKPTTFS. The span at 238–251 shows a compositional bias: basic and acidic residues; that stretch reads KDSKRESNFKTKEE. A helical membrane pass occupies residues 259-279; the sequence is FSLVVGGLLVIAFVVPMAQYF.

Belongs to the UPF0603 family.

Its subcellular location is the plastid. It localises to the chloroplast thylakoid membrane. The polypeptide is UPF0603 protein At1g54780, chloroplastic (Arabidopsis thaliana (Mouse-ear cress)).